Here is a 260-residue protein sequence, read N- to C-terminus: Small ribosomal subunit protein uS2 (260 aa).

The disordered stretch occupies residues 224-260 (GRQGQDAGEDSAEKTFADTADGEGDFEESSNNENQEA). Residues 243–260 (ADGEGDFEESSNNENQEA) are compositionally biased toward acidic residues.

The protein belongs to the universal ribosomal protein uS2 family.

The protein is Small ribosomal subunit protein uS2 of Oenococcus oeni (strain ATCC BAA-331 / PSU-1).